Here is a 638-residue protein sequence, read N- to C-terminus: Chaperone protein DnaK (638 aa).

T199 carries the post-translational modification Phosphothreonine; by autocatalysis. The segment at 600-638 (EINQKKSEENLKKEDTSSESKKDENVVDAEFEEIKDPKK) is disordered. The span at 602 to 624 (NQKKSEENLKKEDTSSESKKDEN) shows a compositional bias: basic and acidic residues.

Belongs to the heat shock protein 70 family.

Acts as a chaperone. The sequence is that of Chaperone protein DnaK from Buchnera aphidicola subsp. Schizaphis graminum (strain Sg).